Consider the following 237-residue polypeptide: Small ribosomal subunit protein uS2c (237 aa).

It belongs to the universal ribosomal protein uS2 family.

It is found in the plastid. In Epifagus virginiana (Beechdrops), this protein is Small ribosomal subunit protein uS2c (rps2).